The following is a 483-amino-acid chain: Putative inorganic phosphate cotransporter (483 aa).

Helical transmembrane passes span 64–84 (YILS…GILA), 90–110 (LRFL…VPVA), 187–207 (IFYV…IFVY), 292–312 (LPYL…DWMI), 349–369 (ALTL…YSGF), 383–403 (FLMS…PIAA), and 420–440 (IVFF…NIFG). The tract at residues 447–483 (WDNPSEDEQKPALESSSTTNPPRLSNGSSAPRAISSS) is disordered. Residues 460–483 (ESSSTTNPPRLSNGSSAPRAISSS) show a composition bias toward polar residues.

This sequence belongs to the major facilitator superfamily. Sodium/anion cotransporter family.

It localises to the membrane. May be an inorganic phosphate cotransporter. This chain is Putative inorganic phosphate cotransporter (Picot), found in Drosophila ananassae (Fruit fly).